The primary structure comprises 221 residues: Ribonuclease P protein subunit p29 (221 aa).

The residue at position 10 (S10) is a Phosphoserine.

Belongs to the eukaryotic/archaeal RNase P protein component 1 family. As to quaternary structure, component of nuclear RNase P and RNase MRP ribonucleoproteins. RNase P consists of a catalytic RNA moiety and 10 different protein chains; POP1, POP4, POP5, POP7, RPP14, RPP21, RPP25, RPP30, RPP38 and RPP40. Within the RNase P complex, POP1, POP7 and RPP25 form the 'finger' subcomplex, POP5, RPP14, RPP40 and homodimeric RPP30 form the 'palm' subcomplex, and RPP21, POP4 and RPP38 form the 'wrist' subcomplex. All subunits of the RNase P complex interact with the catalytic RNA. Several subunits of RNase P are also part of the RNase MRP complex. RNase MRP consists of a catalytic RNA moiety and about 8 protein subunits; POP1, POP7, RPP25, RPP30, RPP38, RPP40 and possibly also POP4 and POP5.

The protein resides in the nucleus. The protein localises to the nucleolus. Its function is as follows. Component of ribonuclease P, a ribonucleoprotein complex that generates mature tRNA molecules by cleaving their 5'-ends. This Mus musculus (Mouse) protein is Ribonuclease P protein subunit p29 (Pop4).